Reading from the N-terminus, the 213-residue chain is Orotidine 5'-phosphate decarboxylase (213 aa).

Residues D11, K33, 61 to 70 (DLKLADIPNT), S113, 166 to 176 (PGVGAQGGKAS), G189, and R190 each bind substrate. K63 serves as the catalytic Proton donor.

This sequence belongs to the OMP decarboxylase family. Type 1 subfamily. In terms of assembly, homodimer.

The enzyme catalyses orotidine 5'-phosphate + H(+) = UMP + CO2. It functions in the pathway pyrimidine metabolism; UMP biosynthesis via de novo pathway; UMP from orotate: step 2/2. Functionally, catalyzes the decarboxylation of orotidine 5'-monophosphate (OMP) to uridine 5'-monophosphate (UMP). The protein is Orotidine 5'-phosphate decarboxylase of Thermococcus kodakarensis (strain ATCC BAA-918 / JCM 12380 / KOD1) (Pyrococcus kodakaraensis (strain KOD1)).